The primary structure comprises 284 residues: 2-dehydro-3-deoxyphosphooctonate aldolase (284 aa).

This sequence belongs to the KdsA family.

It is found in the cytoplasm. The catalysed reaction is D-arabinose 5-phosphate + phosphoenolpyruvate + H2O = 3-deoxy-alpha-D-manno-2-octulosonate-8-phosphate + phosphate. The protein operates within carbohydrate biosynthesis; 3-deoxy-D-manno-octulosonate biosynthesis; 3-deoxy-D-manno-octulosonate from D-ribulose 5-phosphate: step 2/3. It participates in bacterial outer membrane biogenesis; lipopolysaccharide biosynthesis. This Escherichia coli O157:H7 protein is 2-dehydro-3-deoxyphosphooctonate aldolase.